The sequence spans 136 residues: Large-conductance mechanosensitive channel (136 aa).

3 helical membrane passes run 15–35 (IDLA…NSIV), 38–58 (IFMP…MFIQ), and 80–100 (GHFI…FFFV).

Belongs to the MscL family. Homopentamer.

It localises to the cell inner membrane. Its function is as follows. Channel that opens in response to stretch forces in the membrane lipid bilayer. May participate in the regulation of osmotic pressure changes within the cell. The sequence is that of Large-conductance mechanosensitive channel from Bartonella tribocorum (strain CIP 105476 / IBS 506).